The chain runs to 179 residues: Large ribosomal subunit protein uL6 (179 aa).

This sequence belongs to the universal ribosomal protein uL6 family. As to quaternary structure, part of the 50S ribosomal subunit.

Functionally, this protein binds to the 23S rRNA, and is important in its secondary structure. It is located near the subunit interface in the base of the L7/L12 stalk, and near the tRNA binding site of the peptidyltransferase center. This Synechococcus sp. (strain WH7803) protein is Large ribosomal subunit protein uL6.